A 335-amino-acid polypeptide reads, in one-letter code: Fructose-1,6-bisphosphatase class 1 1 (335 aa).

Residues Glu92, Asp114, Leu116, and Asp117 each coordinate Mg(2+). Substrate is bound by residues 117 to 120 (DGSS), Asn209, and Lys275. Residue Glu281 coordinates Mg(2+).

The protein belongs to the FBPase class 1 family. As to quaternary structure, homotetramer. Mg(2+) is required as a cofactor.

It is found in the cytoplasm. The catalysed reaction is beta-D-fructose 1,6-bisphosphate + H2O = beta-D-fructose 6-phosphate + phosphate. Its pathway is carbohydrate biosynthesis; gluconeogenesis. The chain is Fructose-1,6-bisphosphatase class 1 1 from Polaromonas naphthalenivorans (strain CJ2).